The sequence spans 116 residues: Ribonuclease P protein component (116 aa).

Belongs to the RnpA family. As to quaternary structure, consists of a catalytic RNA component (M1 or rnpB) and a protein subunit.

The enzyme catalyses Endonucleolytic cleavage of RNA, removing 5'-extranucleotides from tRNA precursor.. RNaseP catalyzes the removal of the 5'-leader sequence from pre-tRNA to produce the mature 5'-terminus. It can also cleave other RNA substrates such as 4.5S RNA. The protein component plays an auxiliary but essential role in vivo by binding to the 5'-leader sequence and broadening the substrate specificity of the ribozyme. This Caldanaerobacter subterraneus subsp. tengcongensis (strain DSM 15242 / JCM 11007 / NBRC 100824 / MB4) (Thermoanaerobacter tengcongensis) protein is Ribonuclease P protein component.